The sequence spans 3926 residues: MGNEVSLEGGAGDGPLPPGGAGPGPGPGPGPGAGKPPSAPAGGGQLPAAGAARSTAVPPVPGPGPGPGPGPGPGSTSRRLDPKEPLGNQRAASPTPKQASATTPGHESPRETRAQGPAGQEADGPRRTLQVDSRTQRSGRSPSVSPDRGSTPTSPYSVPQIAPLPSSTLCPICKTSDLTSTPSQPNFNTCTQCHNKVCNQCGFNPNPHLTQVKEWLCLNCQMQRALGMDMTTAPRSKSQQQLHSPALSPAHSPAKQPLGKPDQERSRGPGGPQPGSRQAETARATSVPGPAQAAAPPEVGRVSPQPPQPTKPSTAEPRPPAGEAPAKSATAVPAGLGATEQTQEGLTGKLFGLGASLLTQASTLMSVQPEADTQGQPAPSKGTPKIVFNDASKEAGPKPLGSGPGPGPAPGAKTEPGARMGPGSGPGALPKTGGTTSPKHGRAEHQAASKAAAKPKTMPKERAICPLCQAELNVGSKSPANYNTCTTCRLQVCNLCGFNPTPHLVEKTEWLCLNCQTKRLLEGSLGEPTPLPPPTSQQPPVGAPHRASGTSPLKQKGPQGLGQPSGPLPAKASPLSTKASPLPSKASPQAKPLRASEPSKTPSSVQEKKTRVPTKAEPMPKPPPETTPTPATPKVKSGVRRAEPATPVVKAVPEAPKGGEAEDLVGKPYSQDASRSPQSLSDTGYSSDGISSSQSEITGVVQQEVEQLDSAGVTGPHPPSPSEIHKVGSSMRPLLQAQGLAPSERSKPLSSGTGEEQKQRPHSLSITPEAFDSDEELEDILEEDEDSAEWRRRREQQDTAESSDDFGSQLRHDYVEDSSEGGLSPLPPQPPARAAELTDEDFMRRQILEMSAEEDNLEEDDTATSGRGLAKHGTQKGGPRPRPEPSQEPAALPKRRLPHNATTGYEELLPEGGSAEATDGSGTLQGGLRRFKTIELNSTGSYGHELDLGQGPDPSLDREPELEMESLTGSPEDRSRGEHSSTLPASTPSYTSGTSPTSLSSLEEDSDSSPSRRQRLEEAKQQRKARHRSHGPLLPTIEDSSEEEELREEEELLREQEKMREVEQQRIRSTARKTRRDKEELRAQRRRERSKTPPSNLSPIEDASPTEELRQAAEMEELHRSSCSEYSPSPSLDSEAEALDGGPSRLYKSGSEYNLPTFMSLYSPTETPSGSSTTPSSGRPLKSAEEAYEEMMRKAELLQRQQGQAAGARGPHGGPSQPTGPRGLGSFEYQDTTDREYGQAAQPAAEGTPASLGAAVYEEILQTSQSIVRMRQASSRDLAFAEDKKKEKQFLNAESAYMDPMKQNGGPLTPGTSPTQLAAPVSFSTPTSSDSSGGRVIPDVRVTQHFAKETQDPLKLHSSPASPSSASKEIGMPFSQGPGTPATTAVAPCPAGLPRGYMTPASPAGSERSPSPSSTAHSYGHSPTTANYGSQTEDLPQAPSGLAAAGRAAREKPLSASDGEGGTPQPSRAYSYFASSSPPLSPSSPSESPTFSPGKMGPRATAEFSTQTPSPAPASDMPRSPGAPTPSPMVAQGTQTPHRPSTPRLVWQESSQEAPFMVITLASDASSQTRMVHASASTSPLCSPTETQPTTHGYSQTTPPSVSQLPPEPPGPPGFPRVPSAGADGPLALYGWGALPAENISLCRISSVPGTSRVEPGPRTPGTAVVDLRTAVKPTPIILTDQGMDLTSLAVEARKYGLALDPIPGRQSTAVQPLVINLNAQEHTFLATATTVSITMASSVFMAQQKQPVVYGDPYQSRLDFGQGGGSPVCLAQVKQVEQAVQTAPYRSGPRGRPREAKFARYNLPNQVAPLARRDVLITQMGTAQSIGLKPGPVPEPGAEPHRATPAELRSHALPGARKPHTVVVQMGEGTAGTVTTLLPEEPAGALDLTGMRPESQLACCDMVYKLPFGSSCTGTFHPAPSVPEKSMADAAPPGQSSSPFYGPRDPEPPEPPTYRAQGVVGPGPHEEQRPYPQGLPGRLYSSMSDTNLAEAGLNYHAQRIGQLFQGPGRDSAMDLSSLKHSYSLGFADGRYLGQGLQYGSVTDLRHPTDLLAHPLPMRRYSSVSNIYSDHRYGPRGDAVGFQEASLAQYSATTAREISRMCAALNSMDQYGGRHGSGGGGPDLVQYQPQHGPGLSAPQSLVPLRPGLLGNPTFPEGHPSPGNLAQYGPAAGQGTAVRQLLPSTATVRAADGMIYSTINTPIAATLPITTQPASVLRPMVRGGMYRPYASGGITAVPLTSLTRVPMIAPRVPLGPTGLYRYPAPSRFPIASSVPPAEGPVYLGKPAAAKAPGAGGPSRPEMPVGAAREEPLPTTTPAAIKEAAGAPAPAPLAGQKPPADAAPGGGSGALSRPGFEKEEASQEERQRKQQEQLLQLERERVELEKLRQLRLQEELERERVELQRHREEEQLLVQRELQELQTIKHHVLQQQQEERQAQFALQREQLAQQRLQLEQIQQLQQQLQQQLEEQKQRQKAPFPAACEAPGRGPPLAAAELAQNGQYWPPLTHAAFIAMAGPEGLGQPREPVLHRGLPSSASDMSLQTEEQWEASRSGIKKRHSMPRLRDACELESGTEPCVVRRIADSSVQTDDEDGESRYLLSRRRRARRSADCSVQTDDEDSAEWEQPVRRRRSRLPRHSDSGSDSKHDATASSSSAAATVRAMSSVGIQTISDCSVQTEPDQLPRVSPAIHITAATDPKVEIVRYISAPEKTGRGESLACQTEPDGQAQGVAGPQLVGPTAISPYLPGIQIVTPGPLGRFEKKKPDPLEIGYQAHLPPESLSQLVSRQPPKSPQVLYSPVSPLSPHRLLDTSFASSERLNKAHVSPQKHFTADSALRQQTLPRPMKTLQRSLSDPKPLSPTAEESAKERFSLYQHQGGLGSQVSALPPNSLVRKVKRTLPSPPPEEAHLPLAGQASPQLYAASLLQRGLTGPTTVPATKASLLRELDRDLRLVEHESTKLRKKQAELDEEEKEIDAKLKYLELGITQRKESLAKDRGGRDYPPLRGLGEHRDYLSDSELNQLRLQGCTTPAGQFVDFPATAAAPATPSGPTAFQQPRFQPPAPQYSAGSGGPTQNGFPAHQAPTYPGPSTYPAPAFPPGASYPAEPGLPNQQAFRPTGHYAGQTPMPTTQSTLFPVPADSRAPLQKPRQTSLADLEQKVPTNYEVIASPVVPMSSAPSETSYSGPAVSSGYEQGKVPEVPRAGDRGSVSQSPAPTYPSDSHYTSLEQNVPRNYVMIDDISELTKDSTSTAPDSQRLEPLGPGSSGRPGKEPGEPGVLDGPTLPCCYARGEEESEEDSYDPRGKGGHLRSMESNGRPASTHYYGDSDYRHGARVEKYGPGPMGPKHPSKSLAPAAISSKRSKHRKQGMEQKISKFSPIEEAKDVESDLASYPPPAVSSSLVSRGRKFQDEITYGLKKNVYEQQKYYGMSSRDAVEDDRIYGGSSRSRAPSAYSGEKLSSHDFSGWGKGYEREREAVERLQKAGPKPSSLSMAHSRVRPPMRSQASEEESPVSPLGRPRPAGGPLPPGGDTCPQFCSSHSMPDVQEHVKDGPRAHAYKREEGYILDDSHCVVSDSEAYHLGQEETDWFDKPRDARSDRFRHHGGHAVSSSSQKRGPARHSYHDYDEPPEEGLWPHDEGGPGRHASAKEHRHGDHGRHSGRHTGEEPGRRAAKPHARDLGRHEARPHSQPSSAPAMPKKGQPGYPSSAEYSQPSRASSAYHHASDSKKGSRQAHSGPAALQSKAEPQAQPQLQGRQAAPGPQQSQSPSSRQIPSGAASRQPQTQQQQQGLGLQPPQQALTQARLQQQSQPTTRGSAPAASQPAGKPQPGPSTATGPQPAGPPRAEQTNGSKGTAKAPQQGRAPQAQPAPGPGPAGVKAGARPGGTPGAPAGQPGADGESVFSKILPGGAAEQAGKLTEAVSAFGKKFSSFW.

The tract at residues 1–161 (MGNEVSLEGG…PTSPYSVPQI (161 aa)) is disordered. Residue glycine 2 is the site of N-myristoyl glycine attachment. Composition is skewed to pro residues over residues 15–30 (PLPP…PGPG) and 58–72 (PPVP…PGPG). Residues 23–32 (PGPGPGPGPG) are 5 X 2 AA tandem repeats of P-G. The segment at 61-74 (PGPGPGPGPGPGPG) is 7 X 2 AA tandem repeats of P-G. Composition is skewed to polar residues over residues 90–105 (RAAS…TTPG) and 130–157 (QVDS…SPYS). Serine 145 carries the post-translational modification Phosphoserine. Arginine 148 carries the post-translational modification Omega-N-methylarginine. C4-type zinc fingers lie at residues 170–193 (CPIC…CTQC) and 198–220 (CNQC…CLNC). Disordered stretches follow at residues 231–343 (TTAP…EQTQ) and 366–459 (SVQP…KTMP). Over residues 233-243 (APRSKSQQQLH) the composition is skewed to polar residues. Residues serine 244 and serine 248 each carry the phosphoserine modification. Positions 366 to 377 (SVQPEADTQGQP) are enriched in polar residues. 2 consecutive C4-type zinc fingers follow at residues 465-488 (CPLC…CTTC) and 493-515 (CNLC…CLNC). Disordered regions lie at residues 524–927 (SLGE…LQGG) and 940–1248 (GSYG…AEGT). The span at 552 to 569 (PLKQKGPQGLGQPSGPLP) shows a compositional bias: low complexity. A run of 3 repeats spans residues 571–577 (KASPLST), 578–584 (KASPLPS), and 585–591 (KASPQAK). A 3 X 7 AA tandem repeats of K-A-S-P-[LQ]-[APS]-[KST] region spans residues 571 to 591 (KASPLSTKASPLPSKASPQAK). Over residues 619–631 (MPKPPPETTPTPA) the composition is skewed to pro residues. The span at 671–680 (QDASRSPQSL) shows a compositional bias: polar residues. The span at 681–698 (SDTGYSSDGISSSQSEIT) shows a compositional bias: low complexity. Positions 771 to 787 (FDSDEELEDILEEDEDS) are enriched in acidic residues. Over residues 788-797 (AEWRRRREQQ) the composition is skewed to basic and acidic residues. Acidic residues predominate over residues 851-862 (SAEEDNLEEDDT). At arginine 867 the chain carries Omega-N-methylarginine. Residue serine 970 is modified to Phosphoserine. Over residues 984 to 1001 (PASTPSYTSGTSPTSLSS) the composition is skewed to low complexity. A coiled-coil region spans residues 1037–1092 (IEDSSEEEELREEEELLREQEKMREVEQQRIRSTARKTRRDKEELRAQRRRERSKT). A compositionally biased stretch (acidic residues) spans 1039 to 1052 (DSSEEEELREEEEL). Phosphoserine occurs at positions 1040 and 1041. A compositionally biased stretch (basic and acidic residues) spans 1053–1066 (LREQEKMREVEQQR). Serine 1090 carries the phosphoserine modification. Threonine 1092 carries the post-translational modification Phosphothreonine. Serine 1098 and serine 1104 each carry phosphoserine. A compositionally biased stretch (basic and acidic residues) spans 1107 to 1122 (EELRQAAEMEELHRSS). Low complexity-rich tracts occupy residues 1123–1133 (CSEYSPSPSLD) and 1163–1180 (SPTE…SGRP). Residues 1181-1208 (LKSAEEAYEEMMRKAELLQRQQGQAAGA) adopt a coiled-coil conformation. The span at 1182–1197 (KSAEEAYEEMMRKAEL) shows a compositional bias: basic and acidic residues. The segment covering 1199–1209 (QRQQGQAAGAR) has biased composition (low complexity). Serine 1226 carries the phosphoserine modification. The stretch at 1276–1294 (RDLAFAEDKKKEKQFLNAE) forms a coiled coil. 2 disordered regions span residues 1298–1547 (MDPM…RLVW) and 1570–1620 (RMVH…RVPS). Residues 1322-1332 (SFSTPTSSDSS) are compositionally biased toward low complexity. Threonine 1343 carries O-linked (GlcNAc) threonine glycosylation. The span at 1346–1355 (FAKETQDPLK) shows a compositional bias: basic and acidic residues. Low complexity-rich tracts occupy residues 1358–1367 (SSPASPSSAS) and 1377–1392 (GPGT…CPAG). Threonine 1384 is a glycosylation site (O-linked (GlcNAc) threonine). The span at 1408 to 1434 (RSPSPSSTAHSYGHSPTTANYGSQTED) shows a compositional bias: polar residues. A compositionally biased stretch (low complexity) spans 1466 to 1493 (PSRAYSYFASSSPPLSPSSPSESPTFSP). Phosphoserine is present on residues serine 1477, serine 1486, and serine 1488. The segment covering 1570–1598 (RMVHASASTSPLCSPTETQPTTHGYSQTT) has biased composition (polar residues). Over residues 1606-1616 (PPEPPGPPGFP) the composition is skewed to pro residues. Omega-N-methylarginine occurs at positions 1787 and 1791. An Asymmetric dimethylarginine; alternate modification is found at arginine 1801. Arginine 1801 is subject to Omega-N-methylarginine; alternate. Arginine 1813 bears the Omega-N-methylarginine mark. The interval 1924–1978 (PEKSMADAAPPGQSSSPFYGPRDPEPPEPPTYRAQGVVGPGPHEEQRPYPQGLPG) is disordered. Serine 1985 and serine 2041 each carry phosphoserine. Omega-N-methylarginine occurs at positions 2046 and 2076. Asymmetric dimethylarginine occurs at positions 2250, 2260, and 2266. Positions 2287-2309 (AAKAPGAGGPSRPEMPVGAAREE) are disordered. O-linked (GlcNAc) threonine glycosylation is present at threonine 2314. Over residues 2324–2341 (GAPAPAPLAGQKPPADAA) the composition is skewed to low complexity. 2 disordered regions span residues 2324-2370 (GAPA…KQQE) and 2532-2568 (PSSA…ACEL). Positions 2351–2476 (RPGFEKEEAS…EEQKQRQKAP (126 aa)) form a coiled coil. Residues 2353 to 2370 (GFEKEEASQEERQRKQQE) are compositionally biased toward basic and acidic residues. Polar residues predominate over residues 2533-2543 (SSASDMSLQTE). The residue at position 2570 (serine 2570) is a Phosphoserine. Residues threonine 2587 and threonine 2614 each carry the phosphothreonine modification. Positions 2601-2655 (RRRARRSADCSVQTDDEDSAEWEQPVRRRRSRLPRHSDSGSDSKHDATASSSSAA) are disordered. Positions 2635–2647 (RHSDSGSDSKHDA) are enriched in basic and acidic residues. O-linked (GlcNAc) threonine glycosylation occurs at threonine 2691. The interval 2721–3268 (EPDGQAQGVA…PGSSGRPGKE (548 aa)) is interaction with DAO. A phosphoserine mark is found at serine 2802, serine 2851, and serine 2857. The interval 2845–2865 (TLQRSLSDPKPLSPTAEESAK) is disordered. An O-linked (GlcNAc) threonine glycan is attached at threonine 2936. Residues 2939–2981 (SLLRELDRDLRLVEHESTKLRKKQAELDEEEKEIDAKLKYLEL) are a coiled coil. Serine 3013 is modified (phosphoserine). Positions 3039 to 3055 (AAAPATPSGPTAFQQPR) are enriched in low complexity. Disordered regions lie at residues 3039–3375 (AAAP…FSPI), 3424–3551 (GMSS…PRAH), and 3572–3897 (EAYH…SVFS). The segment covering 3083 to 3095 (YPGPSTYPAPAFP) has biased composition (pro residues). Over residues 3165-3176 (ASPVVPMSSAPS) the composition is skewed to low complexity. Residues 3205–3228 (SVSQSPAPTYPSDSHYTSLEQNVP) are compositionally biased toward polar residues. Phosphoserine is present on serine 3291. Composition is skewed to basic and acidic residues over residues 3321–3333 (GDSD…RVEK), 3363–3375 (QGME…FSPI), and 3465–3477 (GYER…ERLQ). Serine 3373 is modified (phosphoserine). Position 3492 is an omega-N-methylarginine (arginine 3492). Basic and acidic residues-rich tracts occupy residues 3540 to 3551 (VQEHVKDGPRAH), 3583 to 3593 (WFDKPRDARSD), 3628 to 3647 (LWPH…EHRH), and 3657 to 3681 (HTGE…EARP). Polar residues predominate over residues 3703 to 3712 (AEYSQPSRAS). Low complexity predominate over residues 3741–3807 (PQAQPQLQGR…RLQQQSQPTT (67 aa)). At arginine 3808 the chain carries Omega-N-methylarginine. 2 stretches are compositionally biased toward low complexity: residues 3849–3860 (AKAPQQGRAPQA) and 3882–3892 (GAPAGQPGADG).

In terms of assembly, interacts with PCLO, ERC2/CAST1, RIMS1 and UNC13A. Interacts with TPRG1L. Interacts with DYNLL1 and DYNLL2; these interactions potentially link PTVs to dynein and myosin V motor complexes. Interacts with ATG5; this interaction is important for the regulation of presynaptic autophagy. Interacts (via C-terminus) with TRIO (via N-terminus). Interacts with CTBP1. Interacts with SIAH1; this interaction negatively regulates SIAH1 E3 ligase activity. Interacts (via coiled region) with DAO; the interaction is direct. In terms of processing, myristoylated. The N-terminal myristoylation is not sufficient for presynaptic localization. As to expression, exclusively expressed in brain.

The protein resides in the cytoplasm. It is found in the presynaptic active zone. It localises to the cytoskeleton. Its subcellular location is the cytoplasmic vesicle. The protein localises to the secretory vesicle. The protein resides in the synaptic vesicle membrane. Scaffold protein of the presynaptic cytomatrix at the active zone (CAZ) which is the place in the synapse where neurotransmitter is released. After synthesis, participates in the formation of Golgi-derived membranous organelles termed Piccolo-Bassoon transport vesicles (PTVs) that are transported along axons to sites of nascent synaptic contacts. At the presynaptic active zone, regulates the spatial organization of synaptic vesicle cluster, the protein complexes that execute membrane fusion and compensatory endocytosis. Also functions in processes other than assembly such as the regulation of specific presynaptic protein ubiquitination by interacting with SIAH1 or the regulation of presynaptic autophagy by associating with ATG5. Also mediates synapse to nucleus communication leading to reconfiguration of gene expression by associating with the transcriptional corepressor CTBP1 and by subsequently reducing the size of its pool available for nuclear import. Inhibits the activity of the proportion of DAO enzyme that localizes to the presynaptic active zone, which may modulate synaptic transmission. In Homo sapiens (Human), this protein is Protein bassoon.